The primary structure comprises 862 residues: uncharacterized protein (862 aa).

Positions 1–25 are cleaved as a signal peptide; the sequence is MKPRPYSVFLFLHIVFYSLLSAVNG. Topologically, residues 26-61 are lumenal; sequence SPSLDYFETCSNFVPRAGIPTFSPYAVIKNFDEVNR. The helical transmembrane segment at 62–82 threads the bilayer; that stretch reads MYYIQVVGNLSGVITIVGGNG. The Cytoplasmic portion of the chain corresponds to 83-187; sequence SHIHAASVYS…STTLYYFYPV (105 aa). A helical transmembrane segment spans residues 188 to 208; sequence ISYLVVVSLAYVSFSIIYALF. At 209–230 the chain is on the lumenal side; it reads LNPWTGSLDPFKSIFNFNMDPD. Residues 231 to 250 traverse the membrane as a helical segment; it reads ALRLTSLGFFDFVQYLQFAV. Topologically, residues 251–256 are cytoplasmic; sequence STAQVS. Residues 257-277 traverse the membrane as a helical segment; that stretch reads VMFPKFYINIMAALSWGTALF. The Lumenal portion of the chain corresponds to 278–329; it reads RFPIFSEPAEYQFADFADLSVASSSYADYLPKSYGMYSFLDSIGIGTACWLP. Residues 330-350 traverse the membrane as a helical segment; that stretch reads FLIVMVIYLFAALFVALLVIF. Residues 351-372 lie on the Cytoplasmic side of the membrane; the sequence is LKWLMSRIFNETIAETRWDTWS. A helical transmembrane segment spans residues 373-393; the sequence is FIAGSLIRLYFLTYFPTVAYM. Residues 394-404 are Lumenal-facing; that stretch reads SFQFVAPPTGY. A helical membrane pass occupies residues 405–425; that stretch reads EIIPVLWFIFFGIFIPVYLYM. The Cytoplasmic segment spans residues 426–457; sequence NLAFVEPSSKLLEDQTYLHLFGSIYNSFREER. The helical transmembrane segment at 458–480 threads the bilayer; that stretch reads VMFWIFPIAVQFMRGITVGVIGS. Over 481–483 the chain is Lumenal; sequence SGS. A helical membrane pass occupies residues 484–503; the sequence is AQLAIFFILEVANVVAYAYV. The Cytoplasmic portion of the chain corresponds to 504–514; that stretch reads RPHFPQTSMNT. The helical transmembrane segment at 515–535 threads the bilayer; that stretch reads LNTFISTMRLITVILMIPLDP. Residues 536–545 lie on the Lumenal side of the membrane; sequence RLKVLGISRD. The chain crosses the membrane as a helical span at residues 546–566; sequence LLAYAILFIHIMVCILFLLLS. Residues 567-862 are Cytoplasmic-facing; that stretch reads TQRFMEVSAR…AESAWSIPHP (296 aa). Over residues 668-686 the composition is skewed to polar residues; that stretch reads QASSLVPSKNNTASSSSLM. 2 disordered regions span residues 668–717 and 815–862; these read QASS…SVRK and VLRS…IPHP. Positions 689 to 700 are enriched in low complexity; it reads SPVTPSSPYSTS. Positions 834 to 850 are enriched in basic and acidic residues; sequence EPSRDEQYSMERKKTDD.

The protein belongs to the transient receptor potential (TRP) ion channel family.

Its subcellular location is the cytoplasm. The protein localises to the golgi apparatus membrane. This is an uncharacterized protein from Schizosaccharomyces pombe (strain 972 / ATCC 24843) (Fission yeast).